The following is a 645-amino-acid chain: 1-deoxy-D-xylulose-5-phosphate synthase 1 (645 aa).

Residues His79 and 120–122 (GHS) each bind thiamine diphosphate. Asp151 provides a ligand contact to Mg(2+). Residues 152–153 (GS), Asn180, Tyr291, and Glu373 each bind thiamine diphosphate. Residue Asn180 participates in Mg(2+) binding.

The protein belongs to the transketolase family. DXPS subfamily. As to quaternary structure, homodimer. It depends on Mg(2+) as a cofactor. Thiamine diphosphate serves as cofactor.

The catalysed reaction is D-glyceraldehyde 3-phosphate + pyruvate + H(+) = 1-deoxy-D-xylulose 5-phosphate + CO2. It functions in the pathway metabolic intermediate biosynthesis; 1-deoxy-D-xylulose 5-phosphate biosynthesis; 1-deoxy-D-xylulose 5-phosphate from D-glyceraldehyde 3-phosphate and pyruvate: step 1/1. Functionally, catalyzes the acyloin condensation reaction between C atoms 2 and 3 of pyruvate and glyceraldehyde 3-phosphate to yield 1-deoxy-D-xylulose-5-phosphate (DXP). The sequence is that of 1-deoxy-D-xylulose-5-phosphate synthase 1 from Rhodospirillum rubrum (strain ATCC 11170 / ATH 1.1.1 / DSM 467 / LMG 4362 / NCIMB 8255 / S1).